The sequence spans 101 residues: Small ribosomal subunit protein uS14A (101 aa).

The protein belongs to the universal ribosomal protein uS14 family. As to quaternary structure, part of the 30S ribosomal subunit. Contacts proteins S3 and S10.

In terms of biological role, binds 16S rRNA, required for the assembly of 30S particles and may also be responsible for determining the conformation of the 16S rRNA at the A site. The protein is Small ribosomal subunit protein uS14A of Salinispora arenicola (strain CNS-205).